Here is a 530-residue protein sequence, read N- to C-terminus: Cytochrome P450 monooxygenase apf7 (530 aa).

The helical transmembrane segment at 6–26 (VSPVSIWVFVIYAVTIIIAIY) threads the bilayer. Asn-85 carries N-linked (GlcNAc...) asparagine glycosylation. Cys-464 is a binding site for heme.

The protein belongs to the cytochrome P450 family. Heme is required as a cofactor.

The protein localises to the membrane. The protein operates within secondary metabolite biosynthesis. Functionally, cytochrome P450 monooxygenase; part of the gene cluster that mediates the biosynthesis of the cyclic tetrapeptide apicidin F (APF). The non-ribosomal peptide synthetase apf1 incorporates four different amino acids to produce apicidin F: L-phenylalanine, D-pipecolic acid (D-pip), N-methoxy-L-tryptophan and L-2-aminooctanedioic acid. L-Phenylalanine is the only proteinogenic amino acid directly used by apf1. The 3 other apf1 substrates are non-proteinogenic and have to be modified by other enzymes of the cluster. Lysine is converted to delta-1-pyrroline-5-carboxylate (P5C) which is reduced to L-pipecolic acid (L-pip) by apf3. L-pip is epimerized to D-pip, probably by apf1 activity, prior to incorporation. L-Tryptophan is N-oxidyzed by one of the cytochrome P450 monooxygenases (apf7 or apf8), and further methylated at the hydroxy group by the O-methyltransferase apf6 to yield N-methoxy-L-tryptophan. The synthesis of the fourth apf1 substrate is more complex. The fatty acid synthase apf5 is involved in the synthesis of the octanoic acid backbone of L-2-aminooctanedioic acid by fixing one acetyl-CoA unit and three malonyl-CoA units. Then one of the cytochrome P450 monooxygenases (apf7 or apf8) may oxidize this backbone to 2-oxooctanoic acid. The aminotransferase apf4 is predicted to catalyze the exchange of the keto group with an amino group. The next step would be the oxidation of 2-aminooctanoic acid by one of the cytochrome P450 monooxygenases (apf7 or apf8). The last step is the oxidation of 2-amino-8-hydroxyoctanoic acid to 2-aminooctanedioic acid is catalyzed by the FAD-dependent monooxygenase apf9. The protein is Cytochrome P450 monooxygenase apf7 of Gibberella fujikuroi (strain CBS 195.34 / IMI 58289 / NRRL A-6831) (Bakanae and foot rot disease fungus).